Here is a 471-residue protein sequence, read N- to C-terminus: Tryptophanase (471 aa).

An N6-acetyllysine mark is found at K5, K115, and K156. K270 carries the N6-(pyridoxal phosphate)lysine modification. At K450 the chain carries N6-acetyllysine.

The protein belongs to the beta-eliminating lyase family. In terms of assembly, homotetramer. Requires pyridoxal 5'-phosphate as cofactor.

The catalysed reaction is L-tryptophan + H2O = indole + pyruvate + NH4(+). It functions in the pathway amino-acid degradation; L-tryptophan degradation via pyruvate pathway; indole and pyruvate from L-tryptophan: step 1/1. This is Tryptophanase from Shigella boydii serotype 18 (strain CDC 3083-94 / BS512).